Here is a 160-residue protein sequence, read N- to C-terminus: Eukaryotic translation initiation factor 5A-3 (160 aa).

Residues 1–12 (MSDEEHHFESKA) are compositionally biased toward basic and acidic residues. The tract at residues 1–21 (MSDEEHHFESKADAGASKTYP) is disordered. Hypusine is present on K52.

This sequence belongs to the eIF-5A family. Lys-52 undergoes hypusination, a unique post-translational modification that consists in the addition of a butylamino group from spermidine to lysine side chain, leading to the formation of the unusual amino acid hypusine. eIF-5As are the only known proteins to undergo this modification, which is essential for their function.

Its function is as follows. Translation factor that promotes translation elongation and termination, particularly upon ribosome stalling at specific amino acid sequence contexts. Binds between the exit (E) and peptidyl (P) site of the ribosome and promotes rescue of stalled ribosome: specifically required for efficient translation of polyproline-containing peptides as well as other motifs that stall the ribosome. Acts as a ribosome quality control (RQC) cofactor by joining the RQC complex to facilitate peptidyl transfer during CAT tailing step. The chain is Eukaryotic translation initiation factor 5A-3 (EIF5A3) from Solanum tuberosum (Potato).